The chain runs to 243 residues: Probable 2-phosphosulfolactate phosphatase (243 aa).

This sequence belongs to the ComB family. Mg(2+) is required as a cofactor.

It carries out the reaction (2R)-O-phospho-3-sulfolactate + H2O = (2R)-3-sulfolactate + phosphate. This Prochlorococcus marinus (strain MIT 9313) protein is Probable 2-phosphosulfolactate phosphatase.